The chain runs to 169 residues: MEEWDLLNENRELTRKTHIRGEKLAPGELHLVVHVCIFNEKGQLLIQKRQKDKEGWPNYWDLSAAGSALKGETSRQAAEREVKEELGMTIDLSNTRAKFSYHFEAGFDDYWFITKDVELSDLTLQTEEVADVRFVTKEKLEALRSSGEFIPYFFLNQLFELKNATTIHF.

In terms of domain architecture, Nudix hydrolase spans 28–157 (ELHLVVHVCI…EFIPYFFLNQ (130 aa)). The Nudix box motif lies at 65-87 (AGSALKGETSRQAAEREVKEELG). Glu-81 and Glu-85 together coordinate Mg(2+).

This sequence belongs to the Nudix hydrolase family. The cofactor is Mg(2+).

This is an uncharacterized protein from Listeria innocua serovar 6a (strain ATCC BAA-680 / CLIP 11262).